Reading from the N-terminus, the 172-residue chain is uncharacterized protein (172 aa).

Positions 3 to 171 (KKVAIILSNE…FNREIVKQLQ (169 aa)) constitute a PfpI endopeptidase domain.

The protein belongs to the peptidase C56 family.

This is an uncharacterized protein from Staphylococcus haemolyticus (strain JCSC1435).